A 146-amino-acid chain; its full sequence is uncharacterized protein (146 aa).

Disordered regions lie at residues 1-33 (MATF…GSYR) and 50-70 (QHWR…SWEG).

This is an uncharacterized protein from Homo sapiens (Human).